A 650-amino-acid chain; its full sequence is Methionine--tRNA ligase (650 aa).

Residues tyrosine 11–histidine 21 carry the 'HIGH' region motif. Zn(2+) contacts are provided by cysteine 126, cysteine 129, cysteine 147, and cysteine 150. The 'KMSKS' region motif lies at lysine 301–serine 305. Position 304 (lysine 304) interacts with ATP. A disordered region spans residues glutamate 513–glutamate 535. Residues aspartate 549 to serine 650 form the tRNA-binding domain.

The protein belongs to the class-I aminoacyl-tRNA synthetase family. MetG type 2A subfamily. Homodimer. Zn(2+) serves as cofactor.

It localises to the cytoplasm. The catalysed reaction is tRNA(Met) + L-methionine + ATP = L-methionyl-tRNA(Met) + AMP + diphosphate. Is required not only for elongation of protein synthesis but also for the initiation of all mRNA translation through initiator tRNA(fMet) aminoacylation. This Helicobacter pylori (strain ATCC 700392 / 26695) (Campylobacter pylori) protein is Methionine--tRNA ligase (metG).